The primary structure comprises 1143 residues: Disease resistance protein Piks-1 (1143 aa).

The structured coiled coil (CC) domain stretch occupies residues 1–190 (MEAAAMAVTA…PLRIMGGEMQ (190 aa)). Positions 189 to 258 (MQKIVFKIPM…KVGPAMFLEV (70 aa)) constitute an HMA domain. Residues 191–264 (KIVFKIPMVD…FLEVSQAKED (74 aa)) form an HMA-like domain region. Positions 282 to 570 (HEVKTICILG…WIAEGFVSEE (289 aa)) constitute an NB-ARC domain. 10 LRR repeats span residues 681–706 (FKRL…ICEQ), 708–731 (SLRV…MRKL), 732–754 (KHLE…IGEL), 756–777 (HLRI…IREL), 778–800 (QHLH…VGKL), 802–823 (NLKI…IGEL), 824–848 (NHLQ…QISQ), 945–968 (MPNL…INGT), 979–1002 (DSRV…EFKF), and 1004–1027 (AGPA…VFRC).

Belongs to the disease resistance NB-LRR family. Interacts with AVR-Pik through its N-terminal part containing the HMA-like domain.

Functionally, disease resistance (R) protein that specifically recognizes the AVR-Pik effector avirulence protein from M.oryzae. Resistance proteins guard the plant against pathogens that contain an appropriate avirulence protein via an indirect interaction with this avirulence protein. That triggers a defense system including the hypersensitive response, which restricts the pathogen growth. The polypeptide is Disease resistance protein Piks-1 (Oryza sativa subsp. japonica (Rice)).